Consider the following 30-residue polypeptide: Proteinase inhibitor CeKI (30 aa).

Belongs to the protease inhibitor I3 (leguminous Kunitz-type inhibitor) family.

Potent inhibitor of serine proteases plasma kallikrein, plasmin and coagulation factor XIIa. Weak inhibitor of serine proteases trypsin and coagulation factor Xa. Does not inhibit the serine proteases chymotrypsin, elastase or thrombin. Inhibits kinin release from HMW-kininogen by kallikrein in vitro. The protein is Proteinase inhibitor CeKI of Paubrasilia echinata (Pau Brasil).